The primary structure comprises 199 residues: Guanylate kinase (199 aa).

One can recognise a Guanylate kinase-like domain in the interval 20–198 (GKLIILTGPS…ALQAIEVALF (179 aa)). An ATP-binding site is contributed by 27-34 (GPSGVGKG).

Belongs to the guanylate kinase family.

Its subcellular location is the cytoplasm. The catalysed reaction is GMP + ATP = GDP + ADP. Its function is as follows. Essential for recycling GMP and indirectly, cGMP. The protein is Guanylate kinase of Nostoc sp. (strain PCC 7120 / SAG 25.82 / UTEX 2576).